A 184-amino-acid chain; its full sequence is MAKYNEKELADTSKFLSFVLRHKPEAIGIVLDREGWADIDKLILCAQKAGKRLTRTLLDTVVATSDKKRFSYSSDGRCIRAVQGHSTSQVAISFAEKTPPQFLYHGTASRFLDEIKKQGLIAGERHYVHLSADEATARKVGARHGSPVILTVKAQEMAKRGIPFWQAENGVWLTSTVAVEFLEW.

Belongs to the KptA/TPT1 family.

Removes the 2'-phosphate from RNA via an intermediate in which the phosphate is ADP-ribosylated by NAD followed by a presumed transesterification to release the RNA and generate ADP-ribose 1''-2''-cyclic phosphate (APPR&gt;P). May function as an ADP-ribosylase. The protein is Probable RNA 2'-phosphotransferase of Escherichia coli O9:H4 (strain HS).